Reading from the N-terminus, the 147-residue chain is Cytochrome c-type biogenesis protein CcmE (147 aa).

Residues 1–7 (MTVRQRR) lie on the Cytoplasmic side of the membrane. The chain crosses the membrane as a helical; Signal-anchor for type II membrane protein span at residues 8 to 28 (FAMVILVVIGVSIATGLGLKA). At 29–147 (FQENILFFYN…KTKANTEDKL (119 aa)) the chain is on the periplasmic side. Positions 123 and 127 each coordinate heme.

It belongs to the CcmE/CycJ family.

Its subcellular location is the cell inner membrane. In terms of biological role, heme chaperone required for the biogenesis of c-type cytochromes. Transiently binds heme delivered by CcmC and transfers the heme to apo-cytochromes in a process facilitated by CcmF and CcmH. This Nitrosococcus oceani (strain ATCC 19707 / BCRC 17464 / JCM 30415 / NCIMB 11848 / C-107) protein is Cytochrome c-type biogenesis protein CcmE.